The following is a 247-amino-acid chain: uncharacterized protein (247 aa).

This sequence belongs to the AIM2 family.

It localises to the cytoplasm. The protein localises to the nucleus. This is an uncharacterized protein from Schizosaccharomyces pombe (strain 972 / ATCC 24843) (Fission yeast).